A 152-amino-acid chain; its full sequence is 6,7-dimethyl-8-ribityllumazine synthase (152 aa).

5-amino-6-(D-ribitylamino)uracil is bound by residues F21, 55-57 (AFE), and 79-81 (CVI). 84-85 (AT) is a binding site for (2S)-2-hydroxy-3-oxobutyl phosphate. The active-site Proton donor is H87. F112 is a binding site for 5-amino-6-(D-ribitylamino)uracil. R126 contributes to the (2S)-2-hydroxy-3-oxobutyl phosphate binding site.

Belongs to the DMRL synthase family. In terms of assembly, forms an icosahedral capsid composed of 60 subunits, arranged as a dodecamer of pentamers.

It carries out the reaction (2S)-2-hydroxy-3-oxobutyl phosphate + 5-amino-6-(D-ribitylamino)uracil = 6,7-dimethyl-8-(1-D-ribityl)lumazine + phosphate + 2 H2O + H(+). The protein operates within cofactor biosynthesis; riboflavin biosynthesis; riboflavin from 2-hydroxy-3-oxobutyl phosphate and 5-amino-6-(D-ribitylamino)uracil: step 1/2. Catalyzes the formation of 6,7-dimethyl-8-ribityllumazine by condensation of 5-amino-6-(D-ribitylamino)uracil with 3,4-dihydroxy-2-butanone 4-phosphate. This is the penultimate step in the biosynthesis of riboflavin. The polypeptide is 6,7-dimethyl-8-ribityllumazine synthase (Staphylococcus carnosus (strain TM300)).